The primary structure comprises 699 residues: Conditioned medium factor (699 aa).

The first 18 residues, 1-18 (MRLLLLLILIITINFSYG), serve as a signal peptide directing secretion. Asn-130, Asn-283, Asn-346, and Asn-430 each carry an N-linked (GlcNAc...) asparagine glycan. The tract at residues 680-699 (SPQQTTNTEYNKEMSSNSVW) is disordered.

N- and O-glycosylated. Post-translationally, the N-terminus is blocked.

Involved in cell density sensing and might synchronize the onset of development by triggering aggregation when a majority of the cells in a given area have starved. The polypeptide is Conditioned medium factor (cmfA) (Dictyostelium discoideum (Social amoeba)).